A 206-amino-acid polypeptide reads, in one-letter code: Nucleoside triphosphate pyrophosphatase (206 aa).

The Proton acceptor role is filled by D76.

The protein belongs to the Maf family. The cofactor is a divalent metal cation.

It is found in the cytoplasm. It catalyses the reaction a ribonucleoside 5'-triphosphate + H2O = a ribonucleoside 5'-phosphate + diphosphate + H(+). The enzyme catalyses a 2'-deoxyribonucleoside 5'-triphosphate + H2O = a 2'-deoxyribonucleoside 5'-phosphate + diphosphate + H(+). Nucleoside triphosphate pyrophosphatase. May have a dual role in cell division arrest and in preventing the incorporation of modified nucleotides into cellular nucleic acids. The chain is Nucleoside triphosphate pyrophosphatase from Streptomyces avermitilis (strain ATCC 31267 / DSM 46492 / JCM 5070 / NBRC 14893 / NCIMB 12804 / NRRL 8165 / MA-4680).